The chain runs to 388 residues: Succinate--CoA ligase [ADP-forming] subunit beta (388 aa).

The 237-residue stretch at 9 to 245 folds into the ATP-grasp domain; it reads KALLKKYGVS…KSQENERELK (237 aa). ATP contacts are provided by residues K46, 53–55, E100, Y103, and E108; that span reads GRG. Mg(2+)-binding residues include N200 and D214. Residues N265 and 322–324 contribute to the substrate site; that span reads GIV.

It belongs to the succinate/malate CoA ligase beta subunit family. Heterotetramer of two alpha and two beta subunits. Requires Mg(2+) as cofactor.

The enzyme catalyses succinate + ATP + CoA = succinyl-CoA + ADP + phosphate. The catalysed reaction is GTP + succinate + CoA = succinyl-CoA + GDP + phosphate. It participates in carbohydrate metabolism; tricarboxylic acid cycle; succinate from succinyl-CoA (ligase route): step 1/1. Succinyl-CoA synthetase functions in the citric acid cycle (TCA), coupling the hydrolysis of succinyl-CoA to the synthesis of either ATP or GTP and thus represents the only step of substrate-level phosphorylation in the TCA. The beta subunit provides nucleotide specificity of the enzyme and binds the substrate succinate, while the binding sites for coenzyme A and phosphate are found in the alpha subunit. This Acinetobacter baylyi (strain ATCC 33305 / BD413 / ADP1) protein is Succinate--CoA ligase [ADP-forming] subunit beta.